A 403-amino-acid polypeptide reads, in one-letter code: Major capsid protein (403 aa).

The protein resides in the virion. Assembles to form an icosahedral capsid. The sequence is that of Major capsid protein from Staphylococcus aureus.